A 465-amino-acid polypeptide reads, in one-letter code: NADH-quinone oxidoreductase subunit N (465 aa).

13 helical membrane passes run 6–26 (ILPETFSIISSLVLLLLGIVF), 30–50 (TINLLALGCTVITLIILILSA), 66–86 (LYIRSAQGLILIAGILVLLLL), 98–118 (SILILFTLFGMITLVSANNLI), 156–176 (ALSSCIMLYGMSLLYGYTGLV), 194–214 (IVFGLVLILIGLCFKLAIAPF), 226–246 (PTIVTAFFSTVPKAALVTFLI), 261–281 (FQPVLLYISALSVLISAFGAL), 289–309 (LLAYSSIGHIGFILASLSIFT), 317–337 (LIYLVIYIITNIGLFSYFIQI), 363–383 (ILLFSMAGIPPLAGFFAKLFI), 391–411 (GFIGMSLIFIVASVISCYYYL), and 432–452 (SLFIVTSVASLINIVLFMCVE).

Belongs to the complex I subunit 2 family. As to quaternary structure, NDH-1 is composed of 14 different subunits. Subunits NuoA, H, J, K, L, M, N constitute the membrane sector of the complex.

It is found in the cell membrane. It carries out the reaction a quinone + NADH + 5 H(+)(in) = a quinol + NAD(+) + 4 H(+)(out). Its function is as follows. NDH-1 shuttles electrons from NADH, via FMN and iron-sulfur (Fe-S) centers, to quinones in the respiratory chain. The immediate electron acceptor for the enzyme in this species is believed to be ubiquinone. Couples the redox reaction to proton translocation (for every two electrons transferred, four hydrogen ions are translocated across the cytoplasmic membrane), and thus conserves the redox energy in a proton gradient. The polypeptide is NADH-quinone oxidoreductase subunit N (Wolbachia sp. subsp. Brugia malayi (strain TRS)).